A 232-amino-acid polypeptide reads, in one-letter code: 6-phosphogluconolactonase (232 aa).

The protein belongs to the glucosamine/galactosamine-6-phosphate isomerase family. 6-phosphogluconolactonase subfamily.

It carries out the reaction 6-phospho-D-glucono-1,5-lactone + H2O = 6-phospho-D-gluconate + H(+). Its pathway is carbohydrate degradation; pentose phosphate pathway; D-ribulose 5-phosphate from D-glucose 6-phosphate (oxidative stage): step 2/3. Its function is as follows. Hydrolysis of 6-phosphogluconolactone to 6-phosphogluconate. This Aggregatibacter actinomycetemcomitans (Actinobacillus actinomycetemcomitans) protein is 6-phosphogluconolactonase (pgl).